The sequence spans 636 residues: Biosynthetic arginine decarboxylase (636 aa).

At Lys-101 the chain carries N6-(pyridoxal phosphate)lysine. Substrate is bound at residue 286-296 (FDVGGGLAVDY).

Belongs to the Orn/Lys/Arg decarboxylase class-II family. SpeA subfamily. Mg(2+) is required as a cofactor. Requires pyridoxal 5'-phosphate as cofactor.

The catalysed reaction is L-arginine + H(+) = agmatine + CO2. It functions in the pathway amine and polyamine biosynthesis; agmatine biosynthesis; agmatine from L-arginine: step 1/1. Catalyzes the biosynthesis of agmatine from arginine. In Shewanella amazonensis (strain ATCC BAA-1098 / SB2B), this protein is Biosynthetic arginine decarboxylase.